A 158-amino-acid polypeptide reads, in one-letter code: NAD(P)H-quinone oxidoreductase subunit J, chloroplastic (158 aa).

Belongs to the complex I 30 kDa subunit family. In terms of assembly, NDH is composed of at least 16 different subunits, 5 of which are encoded in the nucleus.

The protein localises to the plastid. It is found in the chloroplast thylakoid membrane. The enzyme catalyses a plastoquinone + NADH + (n+1) H(+)(in) = a plastoquinol + NAD(+) + n H(+)(out). It carries out the reaction a plastoquinone + NADPH + (n+1) H(+)(in) = a plastoquinol + NADP(+) + n H(+)(out). In terms of biological role, NDH shuttles electrons from NAD(P)H:plastoquinone, via FMN and iron-sulfur (Fe-S) centers, to quinones in the photosynthetic chain and possibly in a chloroplast respiratory chain. The immediate electron acceptor for the enzyme in this species is believed to be plastoquinone. Couples the redox reaction to proton translocation, and thus conserves the redox energy in a proton gradient. This chain is NAD(P)H-quinone oxidoreductase subunit J, chloroplastic, found in Platanus occidentalis (Sycamore).